Here is a 53-residue protein sequence, read N- to C-terminus: Large ribosomal subunit protein bL32c (53 aa).

It belongs to the bacterial ribosomal protein bL32 family.

It localises to the plastid. The protein localises to the chloroplast. The chain is Large ribosomal subunit protein bL32c from Phaseolus vulgaris (Kidney bean).